The chain runs to 426 residues: Phosphoribosylamine--glycine ligase (426 aa).

Residues Lys-113–Thr-320 enclose the ATP-grasp domain. Leu-139–Ser-200 contacts ATP. Mg(2+) is bound by residues Glu-290 and Asn-292.

It belongs to the GARS family. Mg(2+) is required as a cofactor. It depends on Mn(2+) as a cofactor.

It catalyses the reaction 5-phospho-beta-D-ribosylamine + glycine + ATP = N(1)-(5-phospho-beta-D-ribosyl)glycinamide + ADP + phosphate + H(+). It functions in the pathway purine metabolism; IMP biosynthesis via de novo pathway; N(1)-(5-phospho-D-ribosyl)glycinamide from 5-phospho-alpha-D-ribose 1-diphosphate: step 2/2. The sequence is that of Phosphoribosylamine--glycine ligase from Leptospira interrogans serogroup Icterohaemorrhagiae serovar copenhageni (strain Fiocruz L1-130).